The following is a 182-amino-acid chain: Troponin I, fast skeletal muscle (182 aa).

Gly2 carries the N-acetylglycine modification. The tract at residues 2–48 (GDEEKRNRAITARRQHLKSVMLQIAATELEKEEGRREAEKQNYLAEH) is involved in binding TNC. Thr12 carries the phosphothreonine; by PHK modification. The interval 97-117 (NQKLFDLRGKFKRPPLRRVRM) is involved in binding TNC and actin. Ser118 bears the Phosphoserine; by PKA mark.

This sequence belongs to the troponin I family. As to quaternary structure, binds to actin and tropomyosin.

Troponin I is the inhibitory subunit of troponin, the thin filament regulatory complex which confers calcium-sensitivity to striated muscle actomyosin ATPase activity. The chain is Troponin I, fast skeletal muscle (TNNI2) from Oryctolagus cuniculus (Rabbit).